A 2190-amino-acid polypeptide reads, in one-letter code: Integrator complex subunit 1 (2190 aa).

Positions 1–61 (MNRAKPTTVR…GLPSERKRDA (61 aa)) are disordered. At Ser-13 the chain carries Phosphoserine. The segment covering 34–44 (GQANESKTAST) has biased composition (polar residues). At Lys-47 the chain carries N6-acetyllysine. Thr-83 bears the Phosphothreonine mark. Ser-87, Ser-307, and Ser-924 each carry phosphoserine. The disordered stretch occupies residues 922–945 (AASGEEDDEGESKEQKAKKRQRQQ). Acidic residues predominate over residues 923–932 (ASGEEDDEGE). A helical transmembrane segment spans residues 1159–1179 (TATMHILVVHAMVILLTLGPP). The interval 1311–1334 (SLPPRRDSTEAPKPKSSPEQPIGQ) is disordered. The span at 1314 to 1323 (PRRDSTEAPK) shows a compositional bias: basic and acidic residues. A phosphoserine mark is found at Ser-1318, Ser-1326, Ser-1327, and Ser-1395.

Belongs to the Integrator subunit 1 family. As to quaternary structure, component of the Integrator complex, composed of core subunits INTS1, INTS2, INTS3, INTS4, INTS5, INTS6, INTS7, INTS8, INTS9/RC74, INTS10, INTS11/CPSF3L, INTS12, INTS13, INTS14 and INTS15. The core complex associates with protein phosphatase 2A subunits PPP2CA and PPP2R1A, to form the Integrator-PP2A (INTAC) complex. Interacts with ESRRB, ESRRB is not a core component of the Integrator complex and this association is a bridge for the interaction with the multiprotein complex Integrator; attracts the transcriptional machinery.

The protein localises to the nucleus. It is found in the nucleus membrane. Functionally, component of the integrator complex, a multiprotein complex that terminates RNA polymerase II (Pol II) transcription in the promoter-proximal region of genes. The integrator complex provides a quality checkpoint during transcription elongation by driving premature transcription termination of transcripts that are unfavorably configured for transcriptional elongation: the complex terminates transcription by (1) catalyzing dephosphorylation of the C-terminal domain (CTD) of Pol II subunit POLR2A/RPB1 and SUPT5H/SPT5, (2) degrading the exiting nascent RNA transcript via endonuclease activity and (3) promoting the release of Pol II from bound DNA. The integrator complex is also involved in terminating the synthesis of non-coding Pol II transcripts, such as enhancer RNAs (eRNAs), small nuclear RNAs (snRNAs), telomerase RNAs and long non-coding RNAs (lncRNAs). Within the integrator complex, INTS1 is involved in the post-termination step: INTS1 displaces INTS3 and the SOSS factors, allowing the integrator complex to return to the closed conformation, ready to bind to the paused elongation complex for another termination cycle. Mediates recruitment of cytoplasmic dynein to the nuclear envelope, probably as component of the integrator complex. This Homo sapiens (Human) protein is Integrator complex subunit 1.